Consider the following 195-residue polypeptide: Packaging protein 2 (195 aa).

The disordered stretch occupies residues 1-124; sequence MAPKKKLQLP…QEQQQRQGYR (124 aa). Residues 15–53 show a composition bias toward acidic residues; that stretch reads TDEEEYWDSQAEEVLDEEEEMMEDWDSLDEASEAEEVSD. The span at 54–63 shows a compositional bias: low complexity; it reads ETPSPSVAFP.

It belongs to the adenoviridae splicing factor family. As to quaternary structure, part of a genome packaging complex composed of packaging proteins 1, 2 and 3; this complex specifically binds to the packaging sequence on the left end of viral genomic DNA and performs packaging of the viral genome. Self-assembles into higher-order structures.

The protein localises to the host nucleus. Its function is as follows. Component of the packaging machinery which encapsidates the viral DNA into preformed capsids and transcriptional activator of the viral major late promoter (MLP). Binds, along with packaging proteins 1 and 3, to the specific packaging sequence on the left end of viral genomic DNA and plays an active role in packaging of the viral genome into preformed capsids. Specifically binds to the 5'-TTTG-3' nucleotides of the repeats making up the packaging sequence. Forms a transcription factor called DEF-A through cooperative binding with packaging protein 1. DEF-A binds to downstream elements of the major late promoter (MLP) and stimulates transcription from the MLP after initiation of viral DNA replication. Simultaneously suppresses early gene expression and is thus likely to participate in the early-late switch in the expression pattern of the late viral proteins. May as well enhance transcription from IVa2 and pIX promoters. This is Packaging protein 2 from Homo sapiens (Human).